Here is a 124-residue protein sequence, read N- to C-terminus: MPTIQQLIRTERQTLSRKTKSPALRSCPERRGVCTRVYTSTPKKPNSALRKVARVRLTSGFEVTAYIPGIGHNLQEHSVVLIRGGRVKDLPGVRYHIIRGTLDTAGVKDRRQSRSKYGAKAPKE.

Residues arginine 9 to proline 28 are disordered. Aspartate 89 bears the 3-methylthioaspartic acid mark. The disordered stretch occupies residues threonine 104–glutamate 124.

It belongs to the universal ribosomal protein uS12 family. As to quaternary structure, part of the 30S ribosomal subunit. Contacts proteins S8 and S17. May interact with IF1 in the 30S initiation complex.

In terms of biological role, with S4 and S5 plays an important role in translational accuracy. Its function is as follows. Interacts with and stabilizes bases of the 16S rRNA that are involved in tRNA selection in the A site and with the mRNA backbone. Located at the interface of the 30S and 50S subunits, it traverses the body of the 30S subunit contacting proteins on the other side and probably holding the rRNA structure together. The combined cluster of proteins S8, S12 and S17 appears to hold together the shoulder and platform of the 30S subunit. This Synechococcus sp. (strain RCC307) protein is Small ribosomal subunit protein uS12.